The sequence spans 462 residues: Runt-related transcription factor 1 (462 aa).

The disordered stretch occupies residues 1-27; the sequence is MRIPVDTSTSRRFTPPSTTLSPGKMSE. Positions 7-22 are enriched in low complexity; sequence TSTSRRFTPPSTTLSP. Residues 50 to 178 form the Runt domain; the sequence is NMVEVLSDHP…TVDGPREPRR (129 aa). Residues 80 to 84 are interaction with DNA; that stretch reads RCNKT. 4 residues coordinate chloride: asparagine 112, glutamate 116, arginine 139, and valine 170. 2 interaction with DNA regions span residues 135–143 and 168–177; these read RFVGRSGRG and ITVDGPREPR. A disordered region spans residues 399–462; that stretch reads MMSGGERSPP…RLEEAVWRPY (64 aa). Polar residues-rich tracts occupy residues 415–433 and 440–450; these read TNAS…NQSD and SHSNSPTNMGS. Basic and acidic residues predominate over residues 453–462; the sequence is RLEEAVWRPY.

As to quaternary structure, heterodimer with cbfb. runx1 binds DNA as a monomer and through the Runt domain. DNA-binding is increased by heterodimerization. As to expression, shows a complex and dynamic expression pattern. In stage 14-24 embryos, expressed in a subset of neuroblasts in the lateral stripe of the neural plate. In late neurula stages, expression begins in the olfactory placodes. Also expressed in structures that play a role in blood formation: at stage 14, expressed on the anterior ventral side of the embryo in the anterior endomesoderm. As the embryo elongates, expression shifts gradually to a V-shaped expression pattern in the presumptive ventral blood island.

It is found in the nucleus. Its function is as follows. Involved in primitive hematopoiesis in the embryo. This chain is Runt-related transcription factor 1, found in Xenopus laevis (African clawed frog).